Consider the following 459-residue polypeptide: ATP-dependent RNA helicase me31b (459 aa).

The interval 1–267 (MMTEKLNSGH…EINLMEELTL (267 aa)) is recA-like domain 1. A phosphoserine mark is found at serine 8 and serine 29. The Q motif motif lies at 58 to 86 (NEFEEFCLKRELLMGIFEKGWERPSPIQE). A Helicase ATP-binding domain is found at 89–259 (IPIALSGKDV…EKHLREPYEI (171 aa)). 102–109 (AKNGTGKT) lines the ATP pocket. A DEAD box motif is present at residues 207–210 (DEAD). Positions 264 to 431 (ELTLKGVTQY…PKVIDPALYV (168 aa)) are gyf binding. The Helicase C-terminal domain maps to 269–429 (GVTQYYAFVQ…PIPKVIDPAL (161 aa)). The tract at residues 432-459 (ANVGASVGDTCNNSDLNNSANEEGNVSK) is recA-like domain 2. Phosphoserine is present on serine 450.

Belongs to the DEAD box helicase family. DDX6/DHH1 subfamily. In terms of assembly, conserved component of different types of multiprotein ribonucleoprotein complexes (RNPs) that form distinct germ granules (P-body, nuage, sponge body or polar granules) and P-body-like neuronal RNPs. Consequently it interacts with a wide variety of proteins, some of which appear to be common interactive partners in almost all RNPs types i.e. cup and tral, whereas other interactions are specific to a germ granule/RNP. Core functional components in me31B-containing RNPs include RNA regulatory proteins (such as translational repressor, RNA-decapping and exonuclease proteins), RNA localization proteins and additional proteins depending on the biological context of the RNPs. In the P-body RNPs, interacts with at least the translation repressor proteins tral, cup and Edc3, and the mRNA localization factor yps. Interaction with tral or Edc3 is required for translation repression and possibly RNA decapping; binding to tral and Edc3 is mutually exclusive. In the nuage and germ plasm polar granule RNPs, interacts with at least tral, cup, and additional proteins required for assembly and function of the germ granules such as tud, vas and aub. Interacts (when dimethylated on Arg residues) with tud; interaction is RNA-independent. Component of the osk RNP complex, which is composed of at least me31B, exu, yps, aret/bruno, cup, and the mRNA of osk. Component of the nanos RNP complex, which is composed of at least smg, cup, tral, me31B, the CCR4-NOT complex members Rga/NOT2 and Caf1-55, and the mRNA of nanos (nos). Interacts with tral and piRNA pathway components papi and AGO3; promotes interaction between nuage RNPs and the piRNA-mediated transposon silencing. Forms a RNP containing at least me31B, eIF4E1, cup, tral and pAbp; this interaction is required for the translational silencing of maternal mRNAs during the maternal-to-zygotic transition. In the sponge body, forms a RNP containing at least me31B, exu, yps and the mRNA of osk; interactions with exu and yps are RNA dependent. Component of a neuronal RNP, at least composed of me31B, tral and Fmr1. Component of the Atx2-Not1 repressor complex, composed of at least me31B, Atx2, tyf and pAbp. Interacts (via the C-terminus) with Atx2, tyf, pAbp and Lsm12a. Interacts (via RecA-like domain 2) with 4EHP-GYF2 complex member Gyf (via the me31B binding motif). Interacts with 4E-T, Edc3 and Patr-1. Post-translationally, symmetrically dimethylated on arginine residues. In terms of tissue distribution, ubiquitously expressed throughout the brain (at protein level). Expressed in the olfactory system including the antennal lobes, projection neurons, local interneurons, mushroom-body Kenyon cells and glial cells (at protein level).

The protein localises to the cytoplasm. The protein resides in the cytoplasmic ribonucleoprotein granule. It localises to the P-body. Its subcellular location is the endoplasmic reticulum. It is found in the cell projection. The protein localises to the dendrite. It catalyses the reaction ATP + H2O = ADP + phosphate + H(+). Functionally, ATP-dependent RNA helicase which is a core component of a variety of ribonucleoprotein complexes (RNPs) that play critical roles in translational repression and mRNA decapping during embryogenesis, oogenesis, neurogenesis and neurotransmission. Recruits core components and translational repressors to some RNP complexes, and mediates RNP aggregation into processing granules such as P-bodies. As part of a RNP complex containing tral, eIF4E1, cup, and pAbp, involved in RNP-mediated translational repression of maternal mRNAs during oogenesis and embryogenesis. As part of a RNP complex containing tral and the RNA localization factors exu and yps, mediates translational silencing of mRNAs such as osk/oskar and bcd/bicoid during their transport to the oocyte in order to prevent their translation until they reach their positional destinations. In neurons and possibly imaginal disks, involved in miRNA-mediated translational repression, possibly in association with components of the piRNA transposon silencing pathway. Involved in RNA localization and protein trafficking in the oocyte. As part of an ER-associated RNP containing tral, cup and yps, required for tral-dependent ER exit site formation and consequently efficient trafficking of proteins such as grk and yl through the secretory pathway. Component of neuron RNPs that mediate transport and translation of neuronal RNAs, including translation repression of synaptic transcripts in preparation for their dendritic targeting. As part of the Atx2-Not1 repressor complex promotes Not1-dependent post-transcriptional gene silencing in adult circadian pacemaker neurons in order to sustain high-amplitude circadian rhythms and Pdf cycling in a per-independent manner. Promotes the interaction between Atx2 and Not1 within the Atx2-Not1 RNP complex. Recruited to the 4EHP-GYF2 complex by Gyf, where it plays a role in 4EHP-GYF2 mediated translational repression and mRNA decay. This is ATP-dependent RNA helicase me31b (me31B) from Drosophila melanogaster (Fruit fly).